A 222-amino-acid chain; its full sequence is N-(5'-phosphoribosyl)anthranilate isomerase (222 aa).

This sequence belongs to the TrpF family.

It catalyses the reaction N-(5-phospho-beta-D-ribosyl)anthranilate = 1-(2-carboxyphenylamino)-1-deoxy-D-ribulose 5-phosphate. It participates in amino-acid biosynthesis; L-tryptophan biosynthesis; L-tryptophan from chorismate: step 3/5. This is N-(5'-phosphoribosyl)anthranilate isomerase from Rhizobium rhizogenes (strain K84 / ATCC BAA-868) (Agrobacterium radiobacter).